A 116-amino-acid polypeptide reads, in one-letter code: MENKSKLIVLSILFTPNNILYYATQLNGNIIFWTSSGVHKQKNTKKVTLISITTVINYIKYKSVNYKGIHIRTKGFSKNKKLVIKQLKQSTLNILSISDKISWPHNGCKKRKIRRI.

The protein belongs to the universal ribosomal protein uS11 family.

It is found in the mitochondrion. This Chondrus crispus (Carrageen Irish moss) protein is Small ribosomal subunit protein uS11m (RPS11).